We begin with the raw amino-acid sequence, 233 residues long: tRNA (guanine-N(7)-)-methyltransferase (233 aa).

The disordered stretch occupies residues 1–21; that stretch reads MTEESHPLRGAGNFFGRRHGK. Glu-64, Glu-89, Asp-116, and Asp-138 together coordinate S-adenosyl-L-methionine. The active site involves Asp-138. Substrate contacts are provided by residues Lys-142, Asp-174, and 212–215; that span reads TRYE.

The protein belongs to the class I-like SAM-binding methyltransferase superfamily. TrmB family.

It carries out the reaction guanosine(46) in tRNA + S-adenosyl-L-methionine = N(7)-methylguanosine(46) in tRNA + S-adenosyl-L-homocysteine. The protein operates within tRNA modification; N(7)-methylguanine-tRNA biosynthesis. Catalyzes the formation of N(7)-methylguanine at position 46 (m7G46) in tRNA. This Brucella anthropi (strain ATCC 49188 / DSM 6882 / CCUG 24695 / JCM 21032 / LMG 3331 / NBRC 15819 / NCTC 12168 / Alc 37) (Ochrobactrum anthropi) protein is tRNA (guanine-N(7)-)-methyltransferase.